A 124-amino-acid polypeptide reads, in one-letter code: Small ribosomal subunit protein uS12 (124 aa).

The residue at position 89 (Asp-89) is a 3-methylthioaspartic acid.

The protein belongs to the universal ribosomal protein uS12 family. Part of the 30S ribosomal subunit. Contacts proteins S8 and S17. May interact with IF1 in the 30S initiation complex.

With S4 and S5 plays an important role in translational accuracy. Functionally, interacts with and stabilizes bases of the 16S rRNA that are involved in tRNA selection in the A site and with the mRNA backbone. Located at the interface of the 30S and 50S subunits, it traverses the body of the 30S subunit contacting proteins on the other side and probably holding the rRNA structure together. The combined cluster of proteins S8, S12 and S17 appears to hold together the shoulder and platform of the 30S subunit. The chain is Small ribosomal subunit protein uS12 from Pectobacterium atrosepticum (strain SCRI 1043 / ATCC BAA-672) (Erwinia carotovora subsp. atroseptica).